Reading from the N-terminus, the 275-residue chain is Diaminopimelate epimerase (275 aa).

Substrate contacts are provided by Asn-13, Gln-46, and Asn-66. Cys-75 acts as the Proton donor in catalysis. Substrate-binding positions include 76-77, Asn-159, Asn-192, and 210-211; these read GN and ER. Catalysis depends on Cys-219, which acts as the Proton acceptor. Position 220-221 (220-221) interacts with substrate; the sequence is GT.

The protein belongs to the diaminopimelate epimerase family. As to quaternary structure, homodimer.

The protein localises to the cytoplasm. It carries out the reaction (2S,6S)-2,6-diaminopimelate = meso-2,6-diaminopimelate. The protein operates within amino-acid biosynthesis; L-lysine biosynthesis via DAP pathway; DL-2,6-diaminopimelate from LL-2,6-diaminopimelate: step 1/1. Catalyzes the stereoinversion of LL-2,6-diaminopimelate (L,L-DAP) to meso-diaminopimelate (meso-DAP), a precursor of L-lysine and an essential component of the bacterial peptidoglycan. The polypeptide is Diaminopimelate epimerase (Psychromonas ingrahamii (strain DSM 17664 / CCUG 51855 / 37)).